The primary structure comprises 940 residues: UvrABC system protein A (940 aa).

33 to 40 (GVSGSGKS) contacts ATP. Residues 252 to 279 (CPVCGFTVPELEPRLFSFNAPFGSCPDC) form a C4-type zinc finger. ABC transporter domains are found at residues 309–586 (WYGK…KKSL) and 606–935 (IDKK…QYLK). 639-646 (GVSGSGKS) lines the ATP pocket. The C4-type zinc-finger motif lies at 738-764 (CEACSGDGIIKIEMHFLPDVYVPCEVC).

The protein belongs to the ABC transporter superfamily. UvrA family. Forms a heterotetramer with UvrB during the search for lesions.

It localises to the cytoplasm. In terms of biological role, the UvrABC repair system catalyzes the recognition and processing of DNA lesions. UvrA is an ATPase and a DNA-binding protein. A damage recognition complex composed of 2 UvrA and 2 UvrB subunits scans DNA for abnormalities. When the presence of a lesion has been verified by UvrB, the UvrA molecules dissociate. The protein is UvrABC system protein A of Lactococcus lactis subsp. lactis (strain IL1403) (Streptococcus lactis).